The following is a 163-amino-acid chain: Large ribosomal subunit protein bL21 (163 aa).

The segment at 124 to 163 is disordered; the sequence is KETTKKTKATVSIKKTAKKPSEKKSAPQKKAAVVSNNKED.

The protein belongs to the bacterial ribosomal protein bL21 family. In terms of assembly, part of the 50S ribosomal subunit. Contacts protein L20.

In terms of biological role, this protein binds to 23S rRNA in the presence of protein L20. The chain is Large ribosomal subunit protein bL21 from Bartonella quintana (strain Toulouse) (Rochalimaea quintana).